A 391-amino-acid polypeptide reads, in one-letter code: Phosphoglycerate kinase (391 aa).

Substrate-binding positions include 21 to 23 (DLN), arginine 36, 59 to 62 (HRGR), arginine 113, and arginine 146. ATP-binding positions include lysine 197, glutamate 314, and 340–343 (GGDT).

It belongs to the phosphoglycerate kinase family. Monomer.

Its subcellular location is the cytoplasm. It carries out the reaction (2R)-3-phosphoglycerate + ATP = (2R)-3-phospho-glyceroyl phosphate + ADP. It functions in the pathway carbohydrate degradation; glycolysis; pyruvate from D-glyceraldehyde 3-phosphate: step 2/5. The polypeptide is Phosphoglycerate kinase (Ruthia magnifica subsp. Calyptogena magnifica).